The primary structure comprises 268 residues: Exodeoxyribonuclease III (268 aa).

A Mg(2+)-binding site is contributed by Glu-34. Tyr-109 is a catalytic residue. Mg(2+) contacts are provided by Asp-151, Asn-153, and Asp-258. Residue Asp-151 is the Proton donor/acceptor of the active site.

This sequence belongs to the DNA repair enzymes AP/ExoA family. In terms of assembly, monomer. The cofactor is Mg(2+). Mn(2+) serves as cofactor.

It catalyses the reaction Exonucleolytic cleavage in the 3'- to 5'-direction to yield nucleoside 5'-phosphates.. Functionally, major apurinic-apyrimidinic endonuclease of E.coli. It removes the damaged DNA at cytosines and guanines by cleaving on the 3'-side of the AP site by a beta-elimination reaction. It exhibits 3'-5'-exonuclease, 3'-phosphomonoesterase, 3'-repair diesterase and ribonuclease H activities. This is Exodeoxyribonuclease III (xthA) from Salmonella typhi.